Reading from the N-terminus, the 1194-residue chain is Immunoglobulin superfamily member 3 (1194 aa).

The signal sequence occupies residues 1-19; sequence MKCFFPVLSCLAVLGVVSA. Ig-like C2-type domains follow at residues 20 to 138, 143 to 262, 276 to 386, 401 to 539, 545 to 661, 676 to 803, 813 to 945, and 949 to 1097; these read QRQV…AKMN, PDSL…WYAM, PTDK…KTVT, PIVV…VSIT, FAVT…WTRL, PVTK…EEVS, PDSR…TAVT, and PDAA…YRLT. Residues 20-1124 lie on the Extracellular side of the membrane; sequence QRQVTVQEGP…LQSLICSNDA (1105 aa). Intrachain disulfides connect cysteine 42/cysteine 120 and cysteine 167/cysteine 246. The N-linked (GlcNAc...) asparagine glycan is linked to asparagine 43. The EWI motif motif lies at 250–252; that stretch reads EWI. An intrachain disulfide couples cysteine 302 to cysteine 376. An N-linked (GlcNAc...) asparagine glycan is attached at asparagine 418. 5 cysteine pairs are disulfide-bonded: cysteine 432–cysteine 511, cysteine 566–cysteine 645, cysteine 701–cysteine 782, cysteine 838–cysteine 918, and cysteine 974–cysteine 1080. Asparagine 842 is a glycosylation site (N-linked (GlcNAc...) asparagine). The disordered stretch occupies residues 997–1030; it reads GGGKRGSLGIDEQEEEEEEEDISQEEDSEDPTER. The segment covering 1007 to 1026 has biased composition (acidic residues); the sequence is DEQEEEEEEEDISQEEDSED. The N-linked (GlcNAc...) asparagine glycan is linked to asparagine 1077. A helical transmembrane segment spans residues 1125–1145; it reads LFYFVFFYPFPIFGILIITIL. The Cytoplasmic segment spans residues 1146–1194; that stretch reads LVRFKSRNSSKNSEGKNGVPLLWIKEPHLNYSPTCLEPPVLSIHPGAID.

Expressed in the lacrimal duct and lacrimal gland.

The protein resides in the membrane. The polypeptide is Immunoglobulin superfamily member 3 (Igsf3) (Mus musculus (Mouse)).